The following is a 220-amino-acid chain: Phosphatidylserine decarboxylase proenzyme (220 aa).

Catalysis depends on Ser189, which acts as the Schiff-base intermediate with substrate; via pyruvic acid. Pyruvic acid (Ser); by autocatalysis is present on Ser189.

It belongs to the phosphatidylserine decarboxylase family. PSD-A subfamily. In terms of assembly, heterodimer of a large membrane-associated beta subunit and a small pyruvoyl-containing alpha subunit. It depends on pyruvate as a cofactor. Post-translationally, is synthesized initially as an inactive proenzyme. Formation of the active enzyme involves a self-maturation process in which the active site pyruvoyl group is generated from an internal serine residue via an autocatalytic post-translational modification. Two non-identical subunits are generated from the proenzyme in this reaction, and the pyruvate is formed at the N-terminus of the alpha chain, which is derived from the carboxyl end of the proenzyme. The post-translation cleavage follows an unusual pathway, termed non-hydrolytic serinolysis, in which the side chain hydroxyl group of the serine supplies its oxygen atom to form the C-terminus of the beta chain, while the remainder of the serine residue undergoes an oxidative deamination to produce ammonia and the pyruvoyl prosthetic group on the alpha chain.

Its subcellular location is the cell membrane. The enzyme catalyses a 1,2-diacyl-sn-glycero-3-phospho-L-serine + H(+) = a 1,2-diacyl-sn-glycero-3-phosphoethanolamine + CO2. The protein operates within phospholipid metabolism; phosphatidylethanolamine biosynthesis; phosphatidylethanolamine from CDP-diacylglycerol: step 2/2. Functionally, catalyzes the formation of phosphatidylethanolamine (PtdEtn) from phosphatidylserine (PtdSer). This Pelobacter propionicus (strain DSM 2379 / NBRC 103807 / OttBd1) protein is Phosphatidylserine decarboxylase proenzyme.